The sequence spans 390 residues: Tumor susceptibility gene 101 protein (390 aa).

N-acetylalanine is present on alanine 2. Residues 2 to 145 form the UEV domain; the sequence is AVSESQLKKM…GDEPPVFSRP (144 aa). The segment at 158–162 is interaction with CEP55; it reads PPNTS. Over residues 198-214 the composition is skewed to polar residues; sequence ATTSSQYPSQPPVTTVG. The segment at 198–220 is disordered; it reads ATTSSQYPSQPPVTTVGPSRDGT. At threonine 220 the chain carries Phosphothreonine. Positions 235 to 316 form a coiled coil; it reads SDKLRWRMKE…NQSENNDIDE (82 aa). The PTAP motif motif lies at 320–323; the sequence is PTAP. The SB domain maps to 322-390; sequence APLYKQILNL…RKTAGLSDLY (69 aa).

Belongs to the ubiquitin-conjugating enzyme family. UEV subfamily. In terms of assembly, component of the ESCRT-I complex (endosomal sorting complex required for transport I) which consists of TSG101, VPS28, a VPS37 protein (VPS37A to -D) and MVB12A or MVB12B in a 1:1:1:1 stoichiometry. Interacts with VPS37A, VPS37B and VPS37C. Interacts with DMAP1. Interacts with ubiquitin. Interacts with stathmin, GMCL and AATF. Component of an ESCRT-I complex (endosomal sorting complex required for transport I) which consists of TSG101, VPS28, VPS37A and UBAP1 in a 1:1:1:1 stoichiometry. Interacts with HGS; the interaction mediates the association with the ESCRT-0 complex. Interacts with GGA1 and GGA3. Interacts (via UEV domain) with PDCD6IP/AIP1. Interacts with VPS28, SNF8 and VPS36. Self-associates. Interacts with MVB12A; the association appears to be mediated by the TSG101-VPS37 binary subcomplex. Interacts with VPS37D. Interacts with LRSAM1. Interacts with CEP55; the interaction is required for cytokinesis but not for viral budding. Interacts with PDCD6. Interacts with LITAF. Interacts with MGRN1. Interacts with ARRDC1; recruits TSG101 to the plasma membrane. (Microbial infection) Interacts with HIV-1 p6. As to quaternary structure, (Microbial infection) Interacts with human spumavirus Gag. In terms of assembly, (Microbial infection) Interacts with HTLV-1 Gag. (Microbial infection) Interacts with Ebola virus VP40. As to quaternary structure, (Microbial infection) Interacts with EIAV p9; the interaction has been shown in vitro. In terms of assembly, (Microbial infection) Interacts with Lassa virus protein Z. (Microbial infection) Interacts with hepatitis E virus protein ORF3. Monoubiquitinated at multiple sites by LRSAM1 and by MGRN1. Ubiquitination inactivates it, possibly by regulating its shuttling between an active membrane-bound protein and an inactive soluble form. Ubiquitination by MGRN1 requires the presence of UBE2D1. As to expression, heart, brain, placenta, lung, liver, skeletal, kidney and pancreas.

Its subcellular location is the cytoplasm. The protein localises to the early endosome membrane. It is found in the late endosome membrane. It localises to the cytoskeleton. The protein resides in the microtubule organizing center. Its subcellular location is the centrosome. The protein localises to the midbody. It is found in the midbody ring. It localises to the nucleus. Component of the ESCRT-I complex, a regulator of vesicular trafficking process. Binds to ubiquitinated cargo proteins and is required for the sorting of endocytic ubiquitinated cargos into multivesicular bodies (MVBs). Mediates the association between the ESCRT-0 and ESCRT-I complex. Required for completion of cytokinesis; the function requires CEP55. May be involved in cell growth and differentiation. Acts as a negative growth regulator. Involved in the budding of many viruses through an interaction with viral proteins that contain a late-budding motif P-[ST]-A-P. This interaction is essential for viral particle budding of numerous retroviruses. Required for the exosomal release of SDCBP, CD63 and syndecan. It may also play a role in the extracellular release of microvesicles that differ from the exosomes. This Homo sapiens (Human) protein is Tumor susceptibility gene 101 protein (TSG101).